Consider the following 384-residue polypeptide: GDP/UDP-N,N'-diacetylbacillosamine 2-epimerase (hydrolyzing) (384 aa).

The protein belongs to the UDP-N-acetylglucosamine 2-epimerase family.

The catalysed reaction is GDP-N,N'-diacetylbacillosamine + H2O = 2,4-diacetamido-2,4,6-trideoxy-alpha-D-mannopyranose + GDP + H(+). It catalyses the reaction UDP-N,N'-diacetylbacillosamine + H2O = 2,4-diacetamido-2,4,6-trideoxy-alpha-D-mannopyranose + UDP + H(+). Involved in biosynthesis of legionaminic acid (5,7-diamino-3,5,7,9-tetradeoxy-D-glycero-D-galacto-non-2-ulosonic acid)(Leg), a sialic acid-like derivative that is incorporated into flagellin via O-linkage to Ser/Thr. Catalyzes the conversion of GDP-N,N'-diacetylbacillosamine (Bac2Ac4Ac) into 2,4-diacetamido-2,4,6-trideoxymannose and GDP. It can also use UDP-N,N'-diacetylbacillosamine however it generates small quantities of 2,4-diacetamido-2,4,6-trideoxymannose. In Campylobacter jejuni subsp. jejuni serotype O:2 (strain ATCC 700819 / NCTC 11168), this protein is GDP/UDP-N,N'-diacetylbacillosamine 2-epimerase (hydrolyzing) (legG).